Here is a 447-residue protein sequence, read N- to C-terminus: Rab GDP dissociation inhibitor alpha (447 aa).

Ser-427 is modified (phosphoserine).

The protein belongs to the Rab GDI family. Interacts with RHOH. Interacts with the non-phosphorylated forms of RAB1A, RAB3A, RAB5A, RAB5B, RAB5C, RAB8A, RAB8B, RAB10, RAB12, RAB35, and RAB43. In terms of tissue distribution, high expression in brain, lower in other tissues.

The protein localises to the cytoplasm. It localises to the golgi apparatus. The protein resides in the trans-Golgi network. Functionally, regulates the GDP/GTP exchange reaction of most Rab proteins by inhibiting the dissociation of GDP from them, and the subsequent binding of GTP to them. Promotes the dissociation of GDP-bound Rab proteins from the membrane and inhibits their activation. Promotes the dissociation of RAB1A, RAB3A, RAB5A and RAB10 from membranes. The chain is Rab GDP dissociation inhibitor alpha (Gdi1) from Rattus norvegicus (Rat).